We begin with the raw amino-acid sequence, 389 residues long: Cytochrome b (389 aa).

Helical transmembrane passes span 32 to 52, 76 to 98, 113 to 133, and 179 to 199; these read FGSL…FLAM, WIVR…AHIG, LWSI…LGYV, and FFSL…AHFM. Positions 82 and 96 each coordinate heme b. 2 residues coordinate heme b: His183 and His197. His202 contacts a ubiquinone. 4 helical membrane-spanning segments follow: residues 225–245, 289–309, 321–341, and 348–368; these read FIFK…VIVF, LLGV…PLTD, AMKF…WLGS, and YLEI…VIVP.

It belongs to the cytochrome b family. Fungal cytochrome b-c1 complex contains 10 subunits; 3 respiratory subunits, 2 core proteins and 5 low-molecular weight proteins. Cytochrome b-c1 complex is a homodimer. Heme b is required as a cofactor.

The protein localises to the mitochondrion inner membrane. In terms of biological role, component of the ubiquinol-cytochrome c reductase complex (complex III or cytochrome b-c1 complex) that is part of the mitochondrial respiratory chain. The b-c1 complex mediates electron transfer from ubiquinol to cytochrome c. Contributes to the generation of a proton gradient across the mitochondrial membrane that is then used for ATP synthesis. In Strobilurus tenacellus, this protein is Cytochrome b (COB).